Here is a 141-residue protein sequence, read N- to C-terminus: HTH-type transcriptional repressor NsrR (141 aa).

The region spanning 2–129 (QLTSFTDYAL…DECTIESLLS (128 aa)) is the HTH rrf2-type domain. A DNA-binding region (H-T-H motif) is located at residues 28 to 51 (ITEVTDLFGVSRNHMVKVINRLGQ). The [2Fe-2S] cluster site is built by cysteine 91, cysteine 96, and cysteine 102.

[2Fe-2S] cluster is required as a cofactor.

Nitric oxide-sensitive repressor of genes involved in protecting the cell against nitrosative stress. May require iron for activity. In Vibrio parahaemolyticus serotype O3:K6 (strain RIMD 2210633), this protein is HTH-type transcriptional repressor NsrR.